Consider the following 281-residue polypeptide: Tetraspanin-33 (281 aa).

At 1-23 (MGNAKRATQNDEDYTFVSPVVKY) the chain is on the cytoplasmic side. The helical transmembrane segment at 24-44 (LLFFFNMIFWIISLVLISIGV) threads the bilayer. The Extracellular segment spans residues 45–62 (YSRIVKHETALACLTVDP). The helical transmembrane segment at 63 to 83 (ALILMVVGILMFFITFCGCVG) threads the bilayer. The Cytoplasmic portion of the chain corresponds to 84–94 (SLRENICLLQT). A helical transmembrane segment spans residues 95-115 (FCIFLTIMFLLQLLAGVLGFV). At 116–233 (FSDKARGKVT…DILVNWIHSN (118 aa)) the chain is on the extracellular side. Cystine bridges form between C154-C222, C155-C187, C171-C181, and C188-C201. The N-linked (GlcNAc...) asparagine glycan is linked to N170. The chain crosses the membrane as a helical span at residues 234–254 (LFLLGGIALGLTIPQLVGILL). The Cytoplasmic segment spans residues 255-281 (SQVLINQIQDQIKLQNYNQQHRSDPWS).

The protein belongs to the tetraspanin (TM4SF) family. As to quaternary structure, homodimer; disulfide-linked.

The protein resides in the cell membrane. It is found in the cell junction. It localises to the adherens junction. The protein localises to the cytoplasm. Functionally, part of TspanC8 subgroup, composed of 6 members that interact with the transmembrane metalloprotease ADAM10. This interaction is required for ADAM10 exit from the endoplasmic reticulum and for enzymatic maturation and trafficking to the cell surface as well as substrate specificity. Different TspanC8/ADAM10 complexes have distinct substrates. The polypeptide is Tetraspanin-33 (tspan33) (Danio rerio (Zebrafish)).